Reading from the N-terminus, the 352-residue chain is UDP-N-acetylglucosamine--N-acetylmuramyl-(pentapeptide) pyrophosphoryl-undecaprenol N-acetylglucosamine transferase 2 (352 aa).

UDP-N-acetyl-alpha-D-glucosamine contacts are provided by residues 11 to 13 (SAG), R164, S194, and Q289.

Belongs to the glycosyltransferase 28 family. MurG subfamily.

The protein resides in the cell membrane. The catalysed reaction is di-trans,octa-cis-undecaprenyl diphospho-N-acetyl-alpha-D-muramoyl-L-alanyl-D-glutamyl-meso-2,6-diaminopimeloyl-D-alanyl-D-alanine + UDP-N-acetyl-alpha-D-glucosamine = di-trans,octa-cis-undecaprenyl diphospho-[N-acetyl-alpha-D-glucosaminyl-(1-&gt;4)]-N-acetyl-alpha-D-muramoyl-L-alanyl-D-glutamyl-meso-2,6-diaminopimeloyl-D-alanyl-D-alanine + UDP + H(+). It participates in cell wall biogenesis; peptidoglycan biosynthesis. Its function is as follows. Cell wall formation. Catalyzes the transfer of a GlcNAc subunit on undecaprenyl-pyrophosphoryl-MurNAc-pentapeptide (lipid intermediate I) to form undecaprenyl-pyrophosphoryl-MurNAc-(pentapeptide)GlcNAc (lipid intermediate II). The sequence is that of UDP-N-acetylglucosamine--N-acetylmuramyl-(pentapeptide) pyrophosphoryl-undecaprenol N-acetylglucosamine transferase 2 from Bacillus cereus (strain ATCC 10987 / NRS 248).